We begin with the raw amino-acid sequence, 187 residues long: Basic helix-loop-helix transcription factor scleraxis (187 aa).

Disordered stretches follow at residues 21–83 and 140–163; these read LSED…TNSV and AFFH…QPKQ. Positions 34–43 are enriched in basic and acidic residues; the sequence is SDEKPFHLDA. Positions 50–72 are enriched in basic residues; that stretch reads AGKRRSGKKAGRLHREPRQRHTA. Positions 67–119 constitute a bHLH domain; it reads RQRHTANARERDRTNSVNTAFTALRTLIPTEPADRKLSKIETLRLASSYISHL.

As to quaternary structure, efficient DNA binding requires dimerization with another bHLH protein. Dimerizes and binds the E-box consensus sequence with E12. As to expression, expressed in the intersomitic, the superficial proximomedial limb mesenchyme and the subectodermal mesenchyme.

The protein localises to the nucleus. Plays an early essential role in mesoderm formation, as well as a later role in formation of somite-derived chondrogenic lineages. This is Basic helix-loop-helix transcription factor scleraxis (SCX) from Gallus gallus (Chicken).